The chain runs to 512 residues: Maturase K (512 aa).

Belongs to the intron maturase 2 family. MatK subfamily.

It is found in the plastid. Its subcellular location is the chloroplast. Usually encoded in the trnK tRNA gene intron. Probably assists in splicing its own and other chloroplast group II introns. This is Maturase K from Acer platanoides (Norway maple).